The primary structure comprises 172 residues: C-phycocyanin beta chain (172 aa).

At asparagine 72 the chain carries N4-methylasparagine. (2R,3E)-phycocyanobilin-binding residues include cysteine 82 and cysteine 153.

It belongs to the phycobiliprotein family. Heterodimer of an alpha and a beta subunit, which further assembles into trimers and the trimers into hexamers. The basic functional unit of phycobiliproteins is a ring-shaped hexamer formed from two back-to-back trimers contacting via the alpha chain subunits. The trimers are composed of alpha/beta subunit heterodimers arranged around a three-fold axis of symmetry. The phycoerythrins also contain a gamma subunit which is located in the center of the hexamer. Contains two covalently linked bilin chromophores.

The protein resides in the plastid. It is found in the chloroplast thylakoid membrane. Its function is as follows. Light-harvesting photosynthetic bile pigment-protein from the phycobiliprotein complex (phycobilisome, PBS). Phycocyanin is the major phycobiliprotein in the PBS rod. The polypeptide is C-phycocyanin beta chain (cpcB) (Rhodella violacea (Red alga)).